The primary structure comprises 810 residues: Nuclear pore complex protein NUP88 (810 aa).

Residues 1–23 (MKFNFNETEDAPDSRRSPTPKEP) form a disordered region. Residues 646-748 (APNLKRIIDD…RARVKKSTQK (103 aa)) are a coiled coil.

Part of the nuclear pore complex (NPC). The NPC has an eight-fold symmetrical structure comprising a central transport channel and two rings, the cytoplasmic and nuclear rings, to which eight filaments are attached. The cytoplasmic filaments have loose ends, while the nuclear filaments are joined in a distal ring, forming a nuclear basket. NPCs are highly dynamic in configuration and composition, and can be devided in 3 subcomplexes, the NUP62 subcomplex, the NUP107-160 subcomplex and the NUP93 subcomplex, containing approximately 30 different nucleoporin proteins.

The protein resides in the nucleus envelope. The protein localises to the nucleus. It is found in the nuclear pore complex. Its function is as follows. Involved in the regulation of exportin-mediated nuclear protein export. Required for resistance mediated by multiple R proteins and for the appropriate nuclear accumulation of SNC1 and of the downstream defense signaling components EDS1 and NPR1. Not involved in salt tolerance, ethylene and auxin responses, but required for systemic acquired resistance. This Arabidopsis thaliana (Mouse-ear cress) protein is Nuclear pore complex protein NUP88.